The primary structure comprises 85 residues: Colicin-E6 immunity protein (85 aa).

It belongs to the cloacin immunity protein family.

Functionally, this protein inhibits the 16S RNA hydrolyzing activity of colicin E6 by binding with high affinity to the C-terminal catalytic domain of E6. This protein is able to protect a cell, which harbors the plasmid ColE6 against colicin E6. In Escherichia coli, this protein is Colicin-E6 immunity protein (imm).